We begin with the raw amino-acid sequence, 126 residues long: Glycine cleavage system H protein (126 aa).

One can recognise a Lipoyl-binding domain in the interval 23–104 (TLTVGITDHA…PYESWLFKIK (82 aa)). An N6-lipoyllysine modification is found at Lys64.

The protein belongs to the GcvH family. As to quaternary structure, the glycine cleavage system is composed of four proteins: P, T, L and H. The cofactor is (R)-lipoate.

Functionally, the glycine cleavage system catalyzes the degradation of glycine. The H protein shuttles the methylamine group of glycine from the P protein to the T protein. This is Glycine cleavage system H protein from Paraburkholderia xenovorans (strain LB400).